The primary structure comprises 81 residues: Acyl carrier protein (81 aa).

In terms of domain architecture, Carrier spans 4-79; that stretch reads SEIFGKVKDI…AAVDFIAGKV (76 aa). At serine 39 the chain carries O-(pantetheine 4'-phosphoryl)serine.

The protein belongs to the acyl carrier protein (ACP) family. 4'-phosphopantetheine is transferred from CoA to a specific serine of apo-ACP by AcpS. This modification is essential for activity because fatty acids are bound in thioester linkage to the sulfhydryl of the prosthetic group.

It localises to the cytoplasm. It participates in lipid metabolism; fatty acid biosynthesis. Functionally, carrier of the growing fatty acid chain in fatty acid biosynthesis. This chain is Acyl carrier protein, found in Acaryochloris marina (strain MBIC 11017).